The chain runs to 503 residues: AMP phosphorylase (503 aa).

Residues Gly168, 194-199 (SRAITS), and Thr203 contribute to the AMP site. The Proton donor role is filled by Asp256. AMP is bound by residues Ser264 and Lys288.

Belongs to the thymidine/pyrimidine-nucleoside phosphorylase family. Type 2 subfamily.

It catalyses the reaction AMP + phosphate = alpha-D-ribose 1,5-bisphosphate + adenine. The catalysed reaction is CMP + phosphate = cytosine + alpha-D-ribose 1,5-bisphosphate. It carries out the reaction UMP + phosphate = alpha-D-ribose 1,5-bisphosphate + uracil. In terms of biological role, catalyzes the conversion of AMP and phosphate to adenine and ribose 1,5-bisphosphate (R15P). Exhibits phosphorylase activity toward CMP and UMP in addition to AMP. Functions in an archaeal AMP degradation pathway, together with R15P isomerase and RubisCO. The polypeptide is AMP phosphorylase (deoA) (Pyrococcus abyssi (strain GE5 / Orsay)).